A 35-amino-acid polypeptide reads, in one-letter code: Dolichyl-diphosphooligosaccharide--protein glycosyltransferase subunit 4C (35 aa).

The Lumenal portion of the chain corresponds to 1–8; the sequence is MFDDQDLG. A helical membrane pass occupies residues 9–29; that stretch reads FFANFLGIFIFILVIAYHFVM. Residues 30–35 are Cytoplasmic-facing; that stretch reads ADPKFE.

Belongs to the OST4 family. Component of the oligosaccharyltransferase (OST) complex.

The protein resides in the endoplasmic reticulum membrane. Its function is as follows. Subunit of the oligosaccharyl transferase (OST) complex that catalyzes the initial transfer of a defined glycan (Glc(3)Man(9)GlcNAc(2) in eukaryotes) from the lipid carrier dolichol-pyrophosphate to an asparagine residue within an Asn-X-Ser/Thr consensus motif in nascent polypeptide chains, the first step in protein N-glycosylation. N-glycosylation occurs cotranslationally and the complex associates with the Sec61 complex at the channel-forming translocon complex that mediates protein translocation across the endoplasmic reticulum (ER). All subunits are required for a maximal enzyme activity. The protein is Dolichyl-diphosphooligosaccharide--protein glycosyltransferase subunit 4C (OST4C) of Arabidopsis thaliana (Mouse-ear cress).